Consider the following 298-residue polypeptide: ATP phosphoribosyltransferase (298 aa).

Belongs to the ATP phosphoribosyltransferase family. Long subfamily. It depends on Mg(2+) as a cofactor.

The protein resides in the cytoplasm. The enzyme catalyses 1-(5-phospho-beta-D-ribosyl)-ATP + diphosphate = 5-phospho-alpha-D-ribose 1-diphosphate + ATP. It participates in amino-acid biosynthesis; L-histidine biosynthesis; L-histidine from 5-phospho-alpha-D-ribose 1-diphosphate: step 1/9. Feedback inhibited by histidine. In terms of biological role, catalyzes the condensation of ATP and 5-phosphoribose 1-diphosphate to form N'-(5'-phosphoribosyl)-ATP (PR-ATP). Has a crucial role in the pathway because the rate of histidine biosynthesis seems to be controlled primarily by regulation of HisG enzymatic activity. In Aeromonas salmonicida (strain A449), this protein is ATP phosphoribosyltransferase.